The following is a 332-amino-acid chain: NADH-quinone oxidoreductase subunit H (332 aa).

9 consecutive transmembrane segments (helical) span residues 4-24 (FAFFALETLIKCIIIIAIFAS), 44-64 (IGPDMVGPFGLIQLVADMIKL), 78-98 (FIFAIAPLISAICAFVSLAAI), 120-140 (VALLFVIGTSGLCFYAVFLGG), 165-185 (VGALALIAIIMLVGSFSLVDI), 194-214 (FSWLIFKQPLAFVLFIIALFI), 255-275 (IAGAILVTLLFLGGFNSFWII), 279-299 (IMMIVKSSFIFFWYFWARAAF), and 312-332 (YLILIPLAVLNLLITALTVLL).

This sequence belongs to the complex I subunit 1 family. NDH-1 is composed of 14 different subunits. Subunits NuoA, H, J, K, L, M, N constitute the membrane sector of the complex.

It is found in the cell inner membrane. It carries out the reaction a quinone + NADH + 5 H(+)(in) = a quinol + NAD(+) + 4 H(+)(out). Its function is as follows. NDH-1 shuttles electrons from NADH, via FMN and iron-sulfur (Fe-S) centers, to quinones in the respiratory chain. The immediate electron acceptor for the enzyme in this species is believed to be ubiquinone. Couples the redox reaction to proton translocation (for every two electrons transferred, four hydrogen ions are translocated across the cytoplasmic membrane), and thus conserves the redox energy in a proton gradient. This subunit may bind ubiquinone. The sequence is that of NADH-quinone oxidoreductase subunit H from Campylobacter jejuni subsp. jejuni serotype O:2 (strain ATCC 700819 / NCTC 11168).